Here is a 394-residue protein sequence, read N- to C-terminus: Acid ceramidase (394 aa).

The N-terminal stretch at 1 to 18 is a signal peptide; that stretch reads MRGQSLLTWVLAAAVTCA. Residues Cys-30 and Cys-339 are joined by a disulfide bond. The active-site Nucleophile is the Cys-142. N-linked (GlcNAc...) asparagine glycans are attached at residues Asn-172, Asn-194, Asn-258, Asn-341, and Asn-347. Cys-387 and Cys-391 are oxidised to a cystine.

The protein belongs to the acid ceramidase family. Heterodimer; disulfide-linked. The heterodimer is composed of the disulfide-linked alpha and beta chains produced by autocatalytic cleavage of the precursor. Post-translationally, N-glycosylated. In terms of processing, proteolytically cleaved into two chains alpha and beta that remain associated via a disulfide bond. Cleavage gives rise to a conformation change that activates the enzyme. The same catalytic Cys residue mediates the autoproteolytic cleavage and subsequent hydrolysis of lipid substrates. The beta chain may undergo an additional C-terminal processing. In terms of tissue distribution, widely expressed.

Its subcellular location is the lysosome. It is found in the secreted. The enzyme catalyses an N-acylsphing-4-enine + H2O = sphing-4-enine + a fatty acid. The catalysed reaction is N-dodecanoylsphing-4-enine + H2O = dodecanoate + sphing-4-enine. It catalyses the reaction N-(9Z-octadecenoyl)-sphing-4-enine + H2O = sphing-4-enine + (9Z)-octadecenoate. It carries out the reaction N-tetradecanoylsphing-4-enine + H2O = tetradecanoate + sphing-4-enine. The enzyme catalyses N-hexadecanoylsphing-4-enine + H2O = sphing-4-enine + hexadecanoate. The catalysed reaction is N-octadecanoylsphing-4-enine + H2O = sphing-4-enine + octadecanoate. It catalyses the reaction N-dodecanoyl-(4R)-hydroxysphinganine + H2O = (4R)-hydroxysphinganine + dodecanoate. It carries out the reaction N-(dodecanoyl)-sphinganine + H2O = dodecanoate + sphinganine. The enzyme catalyses N-(acetyl)-sphing-4-enine + H2O = sphing-4-enine + acetate. The catalysed reaction is N-(hexanoyl)sphing-4-enine + H2O = hexanoate + sphing-4-enine. It catalyses the reaction N-octanoylsphing-4-enine + H2O = octanoate + sphing-4-enine. It carries out the reaction N-dodecanoylethanolamine + H2O = dodecanoate + ethanolamine. Its pathway is lipid metabolism; sphingolipid metabolism. Its function is as follows. Lysosomal ceramidase that hydrolyzes sphingolipid ceramides into sphingosine and free fatty acids at acidic pH. Ceramides, sphingosine, and its phosphorylated form sphingosine-1-phosphate are bioactive lipids that mediate cellular signaling pathways regulating several biological processes including cell proliferation, apoptosis and differentiation. Has a higher catalytic efficiency towards C12-ceramides versus other ceramides. Also catalyzes the reverse reaction allowing the synthesis of ceramides from fatty acids and sphingosine. For the reverse synthetic reaction, the natural sphingosine D-erythro isomer is more efficiently utilized as a substrate compared to D-erythro-dihydrosphingosine and D-erythro-phytosphingosine, while the fatty acids with chain lengths of 12 or 14 carbons are the most efficiently used. Also has an N-acylethanolamine hydrolase activity. By regulating the levels of ceramides, sphingosine and sphingosine-1-phosphate in the epidermis, mediates the calcium-induced differentiation of epidermal keratinocytes. Also indirectly regulates tumor necrosis factor/TNF-induced apoptosis. By regulating the intracellular balance between ceramides and sphingosine, in adrenocortical cells, probably also acts as a regulator of steroidogenesis. The polypeptide is Acid ceramidase (Mus musculus (Mouse)).